A 21-amino-acid polypeptide reads, in one-letter code: MKPALRDFIAIVQERLASVTA.

Its function is as follows. Possible increased expression of this protein (due to mutations upstream of the start codon) is proposed to be responsible for resistance to 3-hydroxypropionic acid (3-HP). This Escherichia coli (strain K12) protein is Protein IroK (iroK).